Here is a 446-residue protein sequence, read N- to C-terminus: Transcription factor Dp-2 (446 aa).

T2 bears the N-acetylthreonine mark. S24 is subject to Phosphoserine. An interaction with CEBPA region spans residues P60–Y82. The Nuclear localization signal motif lies at G103–E118. S122 carries the phosphoserine modification. A DNA-binding region spans residues G129–P210. Positions D176–P210 match the DEF box motif. Residues N219–S292 are dimerization. The tract at residues E229 to Q261 is DCB1. A DCB2 region spans residues L274 to S330. A compositionally biased stretch (low complexity) spans S409 to C419. The disordered stretch occupies residues S409–E446. A compositionally biased stretch (acidic residues) spans N431–E446.

This sequence belongs to the E2F/DP family. As to quaternary structure, component of the DRTF1/E2F transcription factor complex. Forms heterodimers with E2F family members. The complex can interact with hypophosphorylated retinoblastoma protein RB1 and related proteins (RBL1 and RBL2) that inhibit the E2F transactivation domain. During the cell cycle, RB becomes phosphorylated in mid-to-late G1 phase, detaches from the DRTF1/E2F complex rendering E2F transcriptionally active. Viral oncoproteins, notably E1A, T-antigen and HPV E7, are capable of sequestering RB protein, thus releasing the active complex. Interacts with GMCL. Component of the DREAM complex (also named LINC complex) at least composed of E2F4, E2F5, LIN9, LIN37, LIN52, LIN54, MYBL1, MYBL2, RBL1, RBL2, RBBP4, TFDP1 and TFDP2. The complex exists in quiescent cells where it represses cell cycle-dependent genes. It dissociates in S phase when LIN9, LIN37, LIN52 and LIN54 form a subcomplex that binds to MYBL2. The complex TFDP2:E2F1 interacts with CEBPA; the interaction prevents CEBPA binding to target genes promoters and represses its transcriptional activity. In terms of processing, ser-24 is probably phosphorylated by CDK2. High levels in heart and skeletal muscle. Also found in placenta, kidney, brain, lung and liver. The presence as well as the abundance of the different transcripts appear to vary significantly in different tissues and cell lines.

The protein resides in the nucleus. Its function is as follows. Can stimulate E2F-dependent transcription. Binds DNA cooperatively with E2F family members through the E2 recognition site, 5'-TTTC[CG]CGC-3', found in the promoter region of a number of genes whose products are involved in cell cycle regulation or in DNA replication. The TFDP2:E2F complex functions in the control of cell-cycle progression from G1 to S phase. The E2F1:DP complex appears to mediate both cell proliferation and apoptosis. Blocks adipocyte differentiation by repressing CEBPA binding to its target gene promoters. In Homo sapiens (Human), this protein is Transcription factor Dp-2 (TFDP2).